A 20-amino-acid chain; its full sequence is Agglutinin beta-2 chain isoform 1 (20 aa).

Residues 1–10 (TQSTGTSQTI) show a composition bias toward polar residues. The disordered stretch occupies residues 1–20 (TQSTGTSQTIAVGLWGGPDN).

Belongs to the jacalin lectin family. In terms of assembly, tetramer of four alpha chains associated with two or four beta chains.

Alpha-methyl-D-mannoside and D-mannose specific lectin. Binds IgA. The polypeptide is Agglutinin beta-2 chain isoform 1 (Morus nigra (Black mulberry)).